Reading from the N-terminus, the 326-residue chain is Vomeronasal type-1 receptor 94 (326 aa).

The Extracellular segment spans residues 1–32 (MSEILLFSPQPLFSYTMNKYSRLYTNSNIRNT). A helical membrane pass occupies residues 33–53 (FFSEIGIGIAANSLLLLFHIF). At 54 to 65 (KFIRGQRSRLTD) the chain is on the cytoplasmic side. A helical membrane pass occupies residues 66-86 (LPIGLLSLIHLLKLLMIAFIA). At 87-110 (TDIFISWRGWDDIICKFLVYLYRS) the chain is on the extracellular side. Cysteines 101 and 188 form a disulfide. A helical transmembrane segment spans residues 111-130 (FRGLSLCTTCMLSVLQAITL). The Cytoplasmic segment spans residues 131 to 150 (SPRSSCLAKFKHKSPHHVSC). The chain crosses the membrane as a helical span at residues 151 to 171 (AILSLSVLYMFISSHLLVSLI). At 172–203 (ATPNLTTNVFMYVSESCSILPMSYLMQSMFST) the chain is on the extracellular side. Asn175 carries an N-linked (GlcNAc...) asparagine glycan. The helical transmembrane segment at 204–224 (LLAIRDVFLISLMVLSTCYMV) threads the bilayer. The Cytoplasmic portion of the chain corresponds to 225–254 (ALLCRHRKQTRHLQGTSLSPKASPEKKATH). A helical membrane pass occupies residues 255-275 (SILMLMSFFVLMSILDSIVSC). Residues 276-285 (SRTMFLYDPT) are Extracellular-facing. Residues 286-306 (SYAIQIFVSHIYATVSPFVFM) form a helical membrane-spanning segment. At 307-326 (SNEKHIVNFLRSLCKRVINV) the chain is on the cytoplasmic side.

The protein belongs to the G-protein coupled receptor 1 family.

The protein localises to the cell membrane. Its function is as follows. Putative pheromone receptor implicated in the regulation of social as well as reproductive behavior. The polypeptide is Vomeronasal type-1 receptor 94 (Vom1r94) (Rattus norvegicus (Rat)).